Here is a 154-residue protein sequence, read N- to C-terminus: Large ribosomal subunit protein uL30 (154 aa).

The protein belongs to the universal ribosomal protein uL30 family. Part of the 50S ribosomal subunit.

This chain is Large ribosomal subunit protein uL30, found in Methanoregula boonei (strain DSM 21154 / JCM 14090 / 6A8).